The chain runs to 346 residues: Sensor protein kinase GraS (346 aa).

A run of 2 helical transmembrane segments spans residues 18–38 (IFWI…DYDF) and 43–63 (LFYI…LTFF). In terms of domain architecture, Histidine kinase spans 126–332 (EFVHDIKTPV…TVKLIFPLQN (207 aa)).

As to quaternary structure, interacts with GraX.

It is found in the cell membrane. The enzyme catalyses ATP + protein L-histidine = ADP + protein N-phospho-L-histidine.. Its function is as follows. Member of the two-component regulatory system GraR/GraS involved in resistance against cationic antimicrobial peptides (CAMPs). Functions as a sensor protein kinase which phosphorylates GraR through the auxiliary protein GraX. In turn, GraR up-regulates many genes such as adhesins, exoproteins, transporters, toxins, and proteins involved in cell wall synthesis. Down-regulates the expression of many genes involved in RNA and amino acid synthesis or glycolysis. The polypeptide is Sensor protein kinase GraS (graS) (Staphylococcus aureus (strain MRSA252)).